A 343-amino-acid polypeptide reads, in one-letter code: Small ribosomal subunit biogenesis GTPase RsgA (343 aa).

The CP-type G domain occupies 116–275; the sequence is HGQLKPVAAN…LIDSPGIREF (160 aa). GTP-binding positions include 163–166 and 217–225; these read NKAD and GQSGVGKSS. Zn(2+) is bound by residues cysteine 299, cysteine 304, histidine 306, and cysteine 312.

Belongs to the TRAFAC class YlqF/YawG GTPase family. RsgA subfamily. Monomer. Associates with 30S ribosomal subunit, binds 16S rRNA. Requires Zn(2+) as cofactor.

It localises to the cytoplasm. Functionally, one of several proteins that assist in the late maturation steps of the functional core of the 30S ribosomal subunit. Helps release RbfA from mature subunits. May play a role in the assembly of ribosomal proteins into the subunit. Circularly permuted GTPase that catalyzes slow GTP hydrolysis, GTPase activity is stimulated by the 30S ribosomal subunit. This is Small ribosomal subunit biogenesis GTPase RsgA from Pseudomonas putida (strain ATCC 700007 / DSM 6899 / JCM 31910 / BCRC 17059 / LMG 24140 / F1).